Reading from the N-terminus, the 183-residue chain is MTSFPHPSTSESGPDPDSEPNREEQAHAYCLRLLTARARTRAELAGKLTQRGYDEPVVARVLDRLVDVGLVDDEDFAEQWVRSRHLYAGKGKRALAAELRRKGVDDEVISSSLADIDAGAERDRAERLVRDRLRREKLDDEPGSDLKVKRRLAGMLARRGYSQSMALDVVTVELAGERERRRV.

The span at 1 to 12 (MTSFPHPSTSES) shows a compositional bias: polar residues. Residues 1–26 (MTSFPHPSTSESGPDPDSEPNREEQA) are disordered.

It belongs to the RecX family.

The protein localises to the cytoplasm. In terms of biological role, modulates RecA activity. In Mycobacterium sp. (strain KMS), this protein is Regulatory protein RecX.